A 302-amino-acid chain; its full sequence is uncharacterized protein (302 aa).

Positions 1-22 (MLVVFKRLGFIVSIFSLTFLSA) are cleaved as a signal peptide. The N-palmitoyl cysteine moiety is linked to residue Cys-23. Cys-23 is lipidated: S-diacylglycerol cysteine.

This sequence belongs to the MG067/MG068/MG395 family.

It localises to the cell membrane. This is an uncharacterized protein from Mycoplasma pneumoniae (strain ATCC 29342 / M129 / Subtype 1) (Mycoplasmoides pneumoniae).